The chain runs to 298 residues: Glycine--tRNA ligase alpha subunit (298 aa).

Belongs to the class-II aminoacyl-tRNA synthetase family. In terms of assembly, tetramer of two alpha and two beta subunits.

Its subcellular location is the cytoplasm. The catalysed reaction is tRNA(Gly) + glycine + ATP = glycyl-tRNA(Gly) + AMP + diphosphate. The sequence is that of Glycine--tRNA ligase alpha subunit from Helicobacter acinonychis (strain Sheeba).